We begin with the raw amino-acid sequence, 484 residues long: tRNA sulfurtransferase (484 aa).

A THUMP domain is found at Gln-63–Gln-167. ATP contacts are provided by residues Leu-185 to Met-186, Lys-267, Gly-289, and Gln-298. Residues Cys-346 and Cys-457 are joined by a disulfide bond. The region spanning Ala-405–Pro-483 is the Rhodanese domain. The active-site Cysteine persulfide intermediate is Cys-457.

The protein belongs to the ThiI family.

Its subcellular location is the cytoplasm. The catalysed reaction is [ThiI sulfur-carrier protein]-S-sulfanyl-L-cysteine + a uridine in tRNA + 2 reduced [2Fe-2S]-[ferredoxin] + ATP + H(+) = [ThiI sulfur-carrier protein]-L-cysteine + a 4-thiouridine in tRNA + 2 oxidized [2Fe-2S]-[ferredoxin] + AMP + diphosphate. The enzyme catalyses [ThiS sulfur-carrier protein]-C-terminal Gly-Gly-AMP + S-sulfanyl-L-cysteinyl-[cysteine desulfurase] + AH2 = [ThiS sulfur-carrier protein]-C-terminal-Gly-aminoethanethioate + L-cysteinyl-[cysteine desulfurase] + A + AMP + 2 H(+). The protein operates within cofactor biosynthesis; thiamine diphosphate biosynthesis. Catalyzes the ATP-dependent transfer of a sulfur to tRNA to produce 4-thiouridine in position 8 of tRNAs, which functions as a near-UV photosensor. Also catalyzes the transfer of sulfur to the sulfur carrier protein ThiS, forming ThiS-thiocarboxylate. This is a step in the synthesis of thiazole, in the thiamine biosynthesis pathway. The sulfur is donated as persulfide by IscS. This Pseudomonas syringae pv. syringae (strain B728a) protein is tRNA sulfurtransferase.